A 505-amino-acid chain; its full sequence is Peroxisome proliferator-activated receptor gamma (505 aa).

The tract at residues 1 to 26 (MGETLGDSLIDPESDSFADTLSASTS) is disordered. Residues 17 to 26 (FADTLSASTS) are compositionally biased toward polar residues. Ser112 is modified (phosphoserine; by MAPK). The nuclear receptor DNA-binding region spans 136-210 (AIECRVCGDK…VGMSHNAIRF (75 aa)). 2 NR C4-type zinc fingers span residues 139–159 (CRVC…CEGC) and 176–198 (CDLN…FQKC). The interval 205-280 (HNAIRFGRMP…DKSPFVIYDM (76 aa)) is interaction with FAM120B. In terms of domain architecture, NR LBD spans 238–503 (DLRALAKHLY…HPLLQEIYKD (266 aa)). Lys252 is covalently cross-linked (Glycyl lysine isopeptide (Lys-Gly) (interchain with G-Cter in ubiquitin)). The 9aaTAD motif lies at 495–503 (PLLQEIYKD).

The protein belongs to the nuclear hormone receptor family. NR1 subfamily. As to quaternary structure, interacts with FOXO1 (acetylated form). Heterodimer with other nuclear receptors, such as RXRA. The heterodimer with the retinoic acid receptor RXRA is called adipocyte-specific transcription factor ARF6. Interacts with NCOA6 coactivator, leading to a strong increase in transcription of target genes. Interacts with coactivator PPARBP, leading to a mild increase in transcription of target genes. Interacts with NOCA7 in a ligand-inducible manner. Interacts with NCOA1 and NCOA2 LXXLL motifs. Interacts with ASXL1, ASXL2, DNTTIP2, FAM120B, MAP2K1/MEK1, NR0B2, PDPK1, PRDM16, PRMT2 and TGFB1I1. Interacts (when activated by agonist) with PPP5C. Interacts with HELZ2 and THRAP3; the interaction stimulates the transcriptional activity of PPARG. Interacts with PER2, the interaction is ligand dependent and blocks PPARG recruitment to target promoters. Interacts with NOCT. Interacts with ACTN4. Interacts (when in the liganded conformation) with GPS2. Interacts with CRY1 and CRY2 in a ligand-dependent manner. In the absence of hormonal ligand, interacts with TACC1. In macrophages, interacts with PAQR3 and STUB1; the interactions promote PPARG poylubiquitination and STUB1-mediated degradation. In terms of processing, phosphorylated at basal conditions and dephosphorylated when treated with the ligand. May be dephosphorylated by PPP5C. The phosphorylated form may be inactive and dephosphorylation induces adipogenic activity. Post-translationally, ubiquitinated by E3 ubiquitin-protein ligase complex containing FBXO9; leading to proteasomal degradation. Ubiquitinated at Lys-252 by TRIM55 leading to proteasomal degradation. Ubiquitinated by E3 ubiquitin-protein ligase STUB1/CHIP; leading to proteasomal degradation.

Its subcellular location is the nucleus. It localises to the cytoplasm. Its activity is regulated as follows. PDPK1 activates its transcriptional activity independently of its kinase activity. Functionally, nuclear receptor that binds peroxisome proliferators such as hypolipidemic drugs and fatty acids. Once activated by a ligand, the nuclear receptor binds to DNA specific PPAR response elements (PPRE) and modulates the transcription of its target genes, such as acyl-CoA oxidase. It therefore controls the peroxisomal beta-oxidation pathway of fatty acids. Key regulator of adipocyte differentiation and glucose homeostasis. ARF6 acts as a key regulator of the tissue-specific adipocyte P2 (aP2) enhancer. Acts as a critical regulator of gut homeostasis by suppressing NF-kappa-B-mediated pro-inflammatory responses. Plays a role in the regulation of cardiovascular circadian rhythms by regulating the transcription of BMAL1 in the blood vessels. The chain is Peroxisome proliferator-activated receptor gamma (PPARG) from Canis lupus familiaris (Dog).